The chain runs to 143 residues: Large ribosomal subunit protein uL11 (143 aa).

It belongs to the universal ribosomal protein uL11 family. As to quaternary structure, part of the ribosomal stalk of the 50S ribosomal subunit. Interacts with L10 and the large rRNA to form the base of the stalk. L10 forms an elongated spine to which L12 dimers bind in a sequential fashion forming a multimeric L10(L12)X complex. Post-translationally, one or more lysine residues are methylated.

Its function is as follows. Forms part of the ribosomal stalk which helps the ribosome interact with GTP-bound translation factors. This Chromohalobacter salexigens (strain ATCC BAA-138 / DSM 3043 / CIP 106854 / NCIMB 13768 / 1H11) protein is Large ribosomal subunit protein uL11.